Consider the following 290-residue polypeptide: Sodium/potassium-transporting ATPase subunit beta-2 (290 aa).

Residues 1-39 (MVIQKEKKSCGQVVEEWKEFVWNPRTHQFMGRTGTSWAF) are Cytoplasmic-facing. The helical; Signal-anchor for type II membrane protein transmembrane segment at 40–67 (ILLFYLVFYGFLTAMFTLTMWVMLQTVS) threads the bilayer. The Extracellular segment spans residues 68 to 290 (DHTPKYQDRL…VAFKLRINKT (223 aa)). N96 and N118 each carry an N-linked (GlcNAc...) asparagine glycan. The cysteines at positions 129 and 150 are disulfide-linked. Residues N153 and N159 are each glycosylated (N-linked (GlcNAc...) asparagine). An intrachain disulfide couples C160 to C177. N-linked (GlcNAc...) asparagine glycosylation is found at N193, N197, and N238. The immunoglobulin-like stretch occupies residues 193–290 (NQSMNVTCAG…VAFKLRINKT (98 aa)). An intrachain disulfide couples C200 to C261.

The protein belongs to the X(+)/potassium ATPases subunit beta family. As to quaternary structure, the sodium/potassium-transporting ATPase is composed of a catalytic alpha subunit, an auxiliary non-catalytic beta subunit and an additional regulatory subunit. Interacts with isoform 2 of BSG.

The protein localises to the cell membrane. In terms of biological role, this is the non-catalytic component of the active enzyme, which catalyzes the hydrolysis of ATP coupled with the exchange of Na(+) and K(+) ions across the plasma membrane. The exact function of the beta-2 subunit is not known. Functionally, mediates cell adhesion of neurons and astrocytes, and promotes neurite outgrowth. The sequence is that of Sodium/potassium-transporting ATPase subunit beta-2 (ATP1B2) from Homo sapiens (Human).